Reading from the N-terminus, the 186-residue chain is UPF0398 protein BPUM_1952 (186 aa).

Belongs to the UPF0398 family.

This chain is UPF0398 protein BPUM_1952, found in Bacillus pumilus (strain SAFR-032).